We begin with the raw amino-acid sequence, 293 residues long: Ubiquinone biosynthesis protein COQ9-B, mitochondrial (293 aa).

The interval 21 to 73 (LRSDDQKQPPFSSSSTHAETPEHAEEQYQQQQSPPRYTDQAGEESEDYESEEQ) is disordered. Positions 29-38 (PPFSSSSTHA) are enriched in polar residues. Over residues 61–72 (AGEESEDYESEE) the composition is skewed to acidic residues. Residue Arg-219 coordinates a 1,2-diacylglycero-3-phosphoethanolamine.

Belongs to the COQ9 family. As to quaternary structure, homodimer. Heterodimer; two heterodimers of COQ7:COQ9 come together on the same side of the lipid pseudo-bilayer and form a curved tetramer with a hydrophobic surface suitable for membrane interaction. These two tetramers assemble into a soluble octamer with a pseudo-bilayer of lipids captured within. Interacts with COQ7; this interaction allows ubiquinone (CoQ) isoprene intermediates presentation to COQ7 and facilitates the COQ7-mediated hydroxylase step.

Its subcellular location is the mitochondrion. It functions in the pathway cofactor biosynthesis; ubiquinone biosynthesis. In terms of biological role, membrane-associated protein that warps the membrane surface to access and bind aromatic isoprenes with high specificity, including ubiquinone (CoQ) isoprene intermediates and presents them directly to COQ7, therefore facilitating the COQ7-mediated hydroxylase step. Participates in the biosynthesis of coenzyme Q, also named ubiquinone, an essential lipid-soluble electron transporter for aerobic cellular respiration. The sequence is that of Ubiquinone biosynthesis protein COQ9-B, mitochondrial (coq9-b) from Xenopus laevis (African clawed frog).